The chain runs to 313 residues: Jacalin-related lectin 8 (313 aa).

The N-terminal stretch at 1 to 23 is a signal peptide; the sequence is MFIIYLFIFLSSAIIDSNGVAMA. 2 Jacalin-type lectin domains span residues 24-163 and 165-309; these read QKIE…YVKT and PTKS…YFSP.

It belongs to the jacalin lectin family.

This is Jacalin-related lectin 8 (JAL8) from Arabidopsis thaliana (Mouse-ear cress).